We begin with the raw amino-acid sequence, 136 residues long: MTLKLCVLTPNRIFWDSEVEEIILSTNSGQIGILPTHTPIATSVDIGILRIRLNGRWLTMALMGGFARIGNNEITVLVNDAERSSDIDPQEAQQTVEIAEANFRKAKGKRQKIEANIALCRARTRVKAVSPISVGK.

The protein belongs to the ATPase epsilon chain family. As to quaternary structure, F-type ATPases have 2 components, CF(1) - the catalytic core - and CF(0) - the membrane proton channel. CF(1) has five subunits: alpha(3), beta(3), gamma(1), delta(1), epsilon(1). CF(0) has three main subunits: a, b and c.

It localises to the plastid thylakoid membrane. Produces ATP from ADP in the presence of a proton gradient across the membrane. The chain is ATP synthase epsilon chain, plastid from Cuscuta reflexa (Southern Asian dodder).